The primary structure comprises 43 residues: Protein PsbN (43 aa).

A helical membrane pass occupies residues 7–27 (LSISIGVMVVAITGFSIYTAF).

Belongs to the PsbN family.

The protein localises to the cellular thylakoid membrane. Its function is as follows. May play a role in photosystem I and II biogenesis. The sequence is that of Protein PsbN from Trichodesmium erythraeum (strain IMS101).